Here is a 99-residue protein sequence, read N- to C-terminus: PE family protein PE13 (99 aa).

The PE domain occupies M1 to A93.

Belongs to the mycobacterial PE family.

The protein localises to the secreted. It is found in the cell wall. In terms of biological role, may play a pivotal role in the interaction between M.tuberculosis and host. Can enhance the survival within macrophages under stress conditions such as H(2)O(2), SDS and low pH. Increases the production of IL-6 and IL-1beta from macrophages, and decreases the secretion of suppressor of cytokine signaling 3 (SOCS-3). These changes probably involve the p38-ERK-NF-kappa-B signaling pathway. Also precipitates the macrophage death. The protein is PE family protein PE13 of Mycobacterium tuberculosis (strain ATCC 25618 / H37Rv).